The primary structure comprises 331 residues: Biotin synthase (331 aa).

The 231-residue stretch at phenylalanine 48 to arginine 278 folds into the Radical SAM core domain. Residues cysteine 66, cysteine 70, and cysteine 73 each coordinate [4Fe-4S] cluster. Cysteine 110, cysteine 143, cysteine 203, and arginine 273 together coordinate [2Fe-2S] cluster.

Belongs to the radical SAM superfamily. Biotin synthase family. Homodimer. It depends on [4Fe-4S] cluster as a cofactor. Requires [2Fe-2S] cluster as cofactor.

The catalysed reaction is (4R,5S)-dethiobiotin + (sulfur carrier)-SH + 2 reduced [2Fe-2S]-[ferredoxin] + 2 S-adenosyl-L-methionine = (sulfur carrier)-H + biotin + 2 5'-deoxyadenosine + 2 L-methionine + 2 oxidized [2Fe-2S]-[ferredoxin]. It participates in cofactor biosynthesis; biotin biosynthesis; biotin from 7,8-diaminononanoate: step 2/2. Functionally, catalyzes the conversion of dethiobiotin (DTB) to biotin by the insertion of a sulfur atom into dethiobiotin via a radical-based mechanism. In Hydrogenobaculum sp. (strain Y04AAS1), this protein is Biotin synthase.